Reading from the N-terminus, the 461-residue chain is Cysteine--tRNA ligase (461 aa).

Residue cysteine 30 participates in Zn(2+) binding. The 'HIGH' region signature appears at 32–42 (VTVYDLCHIGH). The Zn(2+) site is built by cysteine 211, histidine 236, and glutamate 240. Residues 268 to 272 (KMSKS) carry the 'KMSKS' region motif. Lysine 271 is a binding site for ATP.

Belongs to the class-I aminoacyl-tRNA synthetase family. Monomer. The cofactor is Zn(2+).

Its subcellular location is the cytoplasm. It catalyses the reaction tRNA(Cys) + L-cysteine + ATP = L-cysteinyl-tRNA(Cys) + AMP + diphosphate. This Shewanella sp. (strain MR-4) protein is Cysteine--tRNA ligase.